The sequence spans 327 residues: ATP-dependent 6-phosphofructokinase (327 aa).

G12 provides a ligand contact to ATP. ADP is bound by residues 22–26 (RGVVR) and 55–60 (RYSVSD). Residues 73–74 (RF) and 103–106 (GDGS) each bind ATP. Position 104 (D104) interacts with Mg(2+). A substrate-binding site is contributed by 127-129 (TID). The Proton acceptor role is filled by D129. R156 is a binding site for ADP. Residues R164 and 171–173 (MGR) contribute to the substrate site. Residues 187–189 (GCE), K213, and 215–217 (KKH) contribute to the ADP site. Substrate is bound by residues E224, R245, and 251–254 (HIQR).

Belongs to the phosphofructokinase type A (PFKA) family. ATP-dependent PFK group I subfamily. Prokaryotic clade 'B1' sub-subfamily. Homotetramer. It depends on Mg(2+) as a cofactor.

The protein resides in the cytoplasm. The enzyme catalyses beta-D-fructose 6-phosphate + ATP = beta-D-fructose 1,6-bisphosphate + ADP + H(+). The protein operates within carbohydrate degradation; glycolysis; D-glyceraldehyde 3-phosphate and glycerone phosphate from D-glucose: step 3/4. Its activity is regulated as follows. Allosterically activated by ADP and other diphosphonucleosides, and allosterically inhibited by phosphoenolpyruvate. Catalyzes the phosphorylation of D-fructose 6-phosphate to fructose 1,6-bisphosphate by ATP, the first committing step of glycolysis. This Hamiltonella defensa subsp. Acyrthosiphon pisum (strain 5AT) protein is ATP-dependent 6-phosphofructokinase.